A 460-amino-acid polypeptide reads, in one-letter code: MAGWSILELLRSNPEALKEHVRKRLMDPAIVDRAYRLDVEWRRLLTMVNEVRRRHNEITRMIAKAGSREERERLIAEAKRLLREREDLEEKLKKVEREREEALLGLPNIVAPDVPVGDESATRPIEFWGKPKVWKGHVDAFREQTEAYGFKVDHEVIEWRPRGHADMMEEVLKLGDTLRAARVAGSRFYYLFEDLVFLDLALLMYAIDFMTSKGYVLVLPPYMLRYNVMSRVIDLETFKDAIYEIAGEDLYLIATAEHPLAALYYNSEIYDEDLPLKLVGVSPCFRKEAGAGNRDLKGIFRVHQFHKVEQFVYSLPEESSKLHEELISNAKEIFKGLEIPFRVVNIASGDLGACAVKKYDLEAWMPAQGKYREMVSASNCTDWQAYRLGIRLVRRKGMERGYVHTLNATAVASTRTITAILENFQDEEGVVAIPRALRRYLEVFKRAPTDAIHPRRRPPA.

Residue 255-257 (TAE) participates in L-serine binding. Residues 286-288 (RKE) and Val302 contribute to the ATP site. Glu309 provides a ligand contact to L-serine. 373-376 (EMVS) provides a ligand contact to ATP. Residue Thr409 coordinates L-serine.

This sequence belongs to the class-II aminoacyl-tRNA synthetase family. Type-1 seryl-tRNA synthetase subfamily. As to quaternary structure, homodimer. The tRNA molecule binds across the dimer.

The protein resides in the cytoplasm. It catalyses the reaction tRNA(Ser) + L-serine + ATP = L-seryl-tRNA(Ser) + AMP + diphosphate + H(+). It carries out the reaction tRNA(Sec) + L-serine + ATP = L-seryl-tRNA(Sec) + AMP + diphosphate + H(+). The protein operates within aminoacyl-tRNA biosynthesis; selenocysteinyl-tRNA(Sec) biosynthesis; L-seryl-tRNA(Sec) from L-serine and tRNA(Sec): step 1/1. Its function is as follows. Catalyzes the attachment of serine to tRNA(Ser). Is also able to aminoacylate tRNA(Sec) with serine, to form the misacylated tRNA L-seryl-tRNA(Sec), which will be further converted into selenocysteinyl-tRNA(Sec). The polypeptide is Serine--tRNA ligase (Aeropyrum pernix (strain ATCC 700893 / DSM 11879 / JCM 9820 / NBRC 100138 / K1)).